Consider the following 2763-residue polypeptide: Large tegument protein deneddylase (2763 aa).

The segment at 1-247 is deubiquitination activity; that stretch reads MDIIPPIAVT…CDTYFTDEQY (247 aa). The Peptidase C76 domain occupies 12 to 237; the sequence is AGVGSRNQFD…SSAVTLIYGS (226 aa). Residues C32, D168, and H170 contribute to the active site. The tract at residues 495 to 523 is interaction with inner tegument protein; that stretch reads LELFINLTILRLTGFVVENGTRTHHGATS. The tract at residues 2456 to 2476 is disordered; the sequence is VRPAQPAQPAQPAQPAQTVQP. 5 repeat units span residues 2458 to 2460, 2461 to 2463, 2464 to 2466, 2467 to 2469, and 2470 to 2472. The tract at residues 2458 to 2472 is 5 X 3 AA repeats of P-A-Q; it reads PAQPAQPAQPAQPAQ. The segment covering 2459–2476 has biased composition (low complexity); sequence AQPAQPAQPAQPAQTVQP.

This sequence belongs to the herpesviridae large tegument protein family. As to quaternary structure, interacts with host CUL1 and CUL4A; these interactions inhibit the E3 ligase activity of cullins. Interacts with inner tegument protein. Interacts with capsid vertex specific component CVC2. Interacts with the major capsid protein/MCP.

Its subcellular location is the virion tegument. It is found in the host cytoplasm. It localises to the host nucleus. It catalyses the reaction Thiol-dependent hydrolysis of ester, thioester, amide, peptide and isopeptide bonds formed by the C-terminal Gly of ubiquitin (a 76-residue protein attached to proteins as an intracellular targeting signal).. In terms of biological role, large tegument protein that plays multiple roles in the viral cycle. During viral entry, remains associated with the capsid while most of the tegument is detached and participates in the capsid transport toward the host nucleus. Plays a role in the routing of the capsid at the nuclear pore complex and subsequent uncoating. Within the host nucleus, acts as a deneddylase and promotes the degradation of nuclear CRLs (cullin-RING ubiquitin ligases) and thereby stabilizes nuclear CRL substrates, while cytoplasmic CRLs remain unaffected. These modifications prevent host cell cycle S-phase progression and create a favorable environment allowing efficient viral genome replication. Participates later in the secondary envelopment of capsids. Indeed, plays a linker role for the association of the outer viral tegument to the capsids together with the inner tegument protein. This is Large tegument protein deneddylase from Homo sapiens (Human).